Consider the following 87-residue polypeptide: Mu-theraphotoxin-Cg1a (87 aa).

The signal sequence occupies residues 1–21 (MKVLVLITLAVLGAMFVWTSA). Residues 22–50 (AELEERGSDQRDSPAWVKSMERIFQSEER) constitute a propeptide that is removed on maturation. Disulfide bonds link Cys-52–Cys-66, Cys-59–Cys-71, and Cys-65–Cys-79.

It belongs to the neurotoxin 10 (Hwtx-1) family. 39 (Jztx-34) subfamily. Expressed by the venom gland.

It is found in the secreted. Potent and selective inhibitor of hNav1.7/SCN9A (IC(50)=610 nM). Also shows a weak activity towards Nav1.3/SCN3A (IC(50)=7950 nM). In addition, inhibits voltage-gated potassium channels (Kv) in rat DRG neurons. It does not alter the voltage dependence of activation, but it causes a small hyperpolarizing shift in the steady-state inactivations of Nav1.7/SNC9A. Chimera experiments show that the toxin binds to the DIIS3-S4 linker (site 4) of Nav1.7/SCN9A, whereas Nav1.7/SCN9A Asp-827 residue is shown by substitution experiments to be critical for its sensitivity. The toxin traps the domain II voltage sensor in the closed configuration, and not in an outward position. In vivo, shows analgesic activity in three rodent pain models (formalin-induced, acid-induced, and thermal). This Chilobrachys guangxiensis (Chinese earth tiger tarantula) protein is Mu-theraphotoxin-Cg1a.